The chain runs to 51 residues: Large ribosomal subunit protein eL39y (51 aa).

The segment at 1 to 21 is disordered; it reads MPSHKSFMIKKKLGKKMRQNR. Basic residues predominate over residues 7 to 19; the sequence is FMIKKKLGKKMRQ.

This sequence belongs to the eukaryotic ribosomal protein eL39 family.

The chain is Large ribosomal subunit protein eL39y (RPL39B) from Arabidopsis thaliana (Mouse-ear cress).